The sequence spans 60 residues: Cecropin-B1 (60 aa).

The N-terminal stretch at 1–24 is a signal peptide; the sequence is MNFSKVFALVLLIGLVLLTGHTEA.

Belongs to the cecropin family.

Its subcellular location is the secreted. In terms of biological role, putative antimicrobial peptide. Partially neutralizes lipopolysaccharides (LPS). Exhibits anti-inflammatory properties: inhibits LPS-induced iNOS/NOS2 transcription, nitric oxide (NO) and pro-inflammatory cytokine production in mouse macrophages and human peripheral blood mononuclear cells (PBMCs); inhibits LPS-induced activation of MAPK and NF-kappa-B signaling pathways in mouse macrophages. The polypeptide is Cecropin-B1 (Aedes aegypti (Yellowfever mosquito)).